Here is an 88-residue protein sequence, read N- to C-terminus: Small ribosomal subunit protein uS17 (88 aa).

Belongs to the universal ribosomal protein uS17 family. As to quaternary structure, part of the 30S ribosomal subunit.

In terms of biological role, one of the primary rRNA binding proteins, it binds specifically to the 5'-end of 16S ribosomal RNA. This chain is Small ribosomal subunit protein uS17, found in Pseudomonas aeruginosa (strain LESB58).